Here is a 333-residue protein sequence, read N- to C-terminus: Phosphoribosylformylglycinamidine cyclo-ligase (333 aa).

This sequence belongs to the AIR synthase family.

Its subcellular location is the cytoplasm. It catalyses the reaction 2-formamido-N(1)-(5-O-phospho-beta-D-ribosyl)acetamidine + ATP = 5-amino-1-(5-phospho-beta-D-ribosyl)imidazole + ADP + phosphate + H(+). It functions in the pathway purine metabolism; IMP biosynthesis via de novo pathway; 5-amino-1-(5-phospho-D-ribosyl)imidazole from N(2)-formyl-N(1)-(5-phospho-D-ribosyl)glycinamide: step 2/2. The protein is Phosphoribosylformylglycinamidine cyclo-ligase of Methanococcoides burtonii (strain DSM 6242 / NBRC 107633 / OCM 468 / ACE-M).